A 336-amino-acid polypeptide reads, in one-letter code: PTS system glucitol/sorbitol-specific EIIB component (336 aa).

In terms of domain architecture, PTS EIIB type-5 spans 3-195 (KYNAIKIVKG…AVQSMITTIL (193 aa)). Residue Cys75 is the Phosphocysteine intermediate; for EIIB activity of the active site. Cys75 carries the phosphocysteine; by EIIA modification. 5 helical membrane-spanning segments follow: residues 194–214 (ILPFMAFVAMLIGIIQGSGFG), 228–248 (GIGLMILGFICSIPLLSALLG), 250–270 (GAVIAQIVGTLIGVEIGKGTI), 278–298 (ALFAINTQCACDFIPVGLGLA), and 312–332 (VLYSRFMIGVPRVAVAWVASI).

The protein localises to the cell membrane. It carries out the reaction D-sorbitol(out) + N(pros)-phospho-L-histidyl-[protein] = D-sorbitol 6-phosphate(in) + L-histidyl-[protein]. The phosphoenolpyruvate-dependent sugar phosphotransferase system (sugar PTS), a major carbohydrate active transport system, catalyzes the phosphorylation of incoming sugar substrates concomitantly with their translocation across the cell membrane. The enzyme II complex composed of SrlA, SrlB and SrlE is involved in glucitol/sorbitol transport. This is PTS system glucitol/sorbitol-specific EIIB component (srlE) from Clostridium beijerinckii (strain ATCC 51743 / NCIMB 8052) (Clostridium acetobutylicum).